The chain runs to 215 residues: NADH-quinone oxidoreductase subunit C (215 aa).

It belongs to the complex I 30 kDa subunit family. NDH-1 is composed of 14 different subunits. Subunits NuoB, C, D, E, F, and G constitute the peripheral sector of the complex.

The protein resides in the cell inner membrane. The enzyme catalyses a quinone + NADH + 5 H(+)(in) = a quinol + NAD(+) + 4 H(+)(out). NDH-1 shuttles electrons from NADH, via FMN and iron-sulfur (Fe-S) centers, to quinones in the respiratory chain. The immediate electron acceptor for the enzyme in this species is believed to be ubiquinone. Couples the redox reaction to proton translocation (for every two electrons transferred, four hydrogen ions are translocated across the cytoplasmic membrane), and thus conserves the redox energy in a proton gradient. This chain is NADH-quinone oxidoreductase subunit C, found in Dinoroseobacter shibae (strain DSM 16493 / NCIMB 14021 / DFL 12).